The sequence spans 961 residues: Exportin-T (961 aa).

This sequence belongs to the exportin family.

It is found in the cytoplasm. It localises to the nucleus. Functionally, mediates the nuclear export of aminoacylated tRNAs. The polypeptide is Exportin-T (xpot) (Danio rerio (Zebrafish)).